We begin with the raw amino-acid sequence, 446 residues long: Probable rhamnogalacturonase A (446 aa).

An N-terminal signal peptide occupies residues 1–18 (MPALPILALALAPLLVNG). An intrachain disulfide couples C39 to C65. Residues N50, N115, and N124 are each glycosylated (N-linked (GlcNAc...) asparagine). Residue D216 is the Proton donor of the active site. C218 and C235 form a disulfide bridge. N-linked (GlcNAc...) asparagine glycans are attached at residues N236 and N281. The active site involves H291. A glycan (N-linked (GlcNAc...) asparagine) is linked at N318. 2 disulfides stabilise this stretch: C341–C347 and C369–C378.

This sequence belongs to the glycosyl hydrolase 28 family.

It localises to the secreted. The catalysed reaction is Endohydrolysis of alpha-D-GalA-(1-&gt;2)-alpha-L-Rha glycosidic bond in the rhamnogalacturonan I backbone with initial inversion of anomeric configuration releasing oligosaccharides with beta-D-GalA at the reducing end.. In terms of biological role, pectinolytic enzymes consist of four classes of enzymes: pectine lyase, polygalacturonase, pectin methylesterase and rhamnogalacturonase. Hydrolyzes alpha-D-galacturonopyranosyl-(1,2)-alpha-L-rhamnopyranosyl linkages in the backbone of the hairy regions of pectins. The protein is Probable rhamnogalacturonase A (rhgA) of Aspergillus niger (strain ATCC MYA-4892 / CBS 513.88 / FGSC A1513).